The following is a 332-amino-acid chain: Putative peptide import ATP-binding protein BruAb2_1033 (332 aa).

The ABC transporter domain maps to 11-261 (LEVSNLSVDF…PLHPYTEGLL (251 aa)). 47-54 (GESGSGKS) serves as a coordination point for ATP.

It belongs to the ABC transporter superfamily. As to quaternary structure, the complex is composed of two ATP-binding proteins (BruAb2_1033 and BruAb2_1034), two transmembrane proteins (BruAb2_1031 and BruAb2_1032) and a solute-binding protein (BruAb2_1030).

The protein localises to the cell inner membrane. Its function is as follows. Probably part of an ABC transporter complex that could be involved in peptide import. Probably responsible for energy coupling to the transport system. In Brucella abortus biovar 1 (strain 9-941), this protein is Putative peptide import ATP-binding protein BruAb2_1033.